The sequence spans 225 residues: Cytochrome c oxidase subunit 2 (225 aa).

The Mitochondrial intermembrane portion of the chain corresponds to 1–26 (MMTWSQMSFSDMNSPIMEQMVFFHDH). Residues 27–48 (SMMIILMITILTIYMITNIMMN) traverse the membrane as a helical segment. Over 49-62 (NLLSRSMMEGQEIE) the chain is Mitochondrial matrix. A helical transmembrane segment spans residues 63 to 82 (IIWTIIPAITLIFIAIPSLH). The Mitochondrial intermembrane portion of the chain corresponds to 83–225 (LLYLTDETFN…KNFINFINSS (143 aa)). His160, Cys195, Glu197, Cys199, His203, and Met206 together coordinate Cu cation. Glu197 serves as a coordination point for Mg(2+).

Belongs to the cytochrome c oxidase subunit 2 family. Component of the cytochrome c oxidase (complex IV, CIV), a multisubunit enzyme composed of a catalytic core of 3 subunits and several supernumerary subunits. The complex exists as a monomer or a dimer and forms supercomplexes (SCs) in the inner mitochondrial membrane with ubiquinol-cytochrome c oxidoreductase (cytochrome b-c1 complex, complex III, CIII). It depends on Cu cation as a cofactor.

The protein localises to the mitochondrion inner membrane. The enzyme catalyses 4 Fe(II)-[cytochrome c] + O2 + 8 H(+)(in) = 4 Fe(III)-[cytochrome c] + 2 H2O + 4 H(+)(out). Functionally, component of the cytochrome c oxidase, the last enzyme in the mitochondrial electron transport chain which drives oxidative phosphorylation. The respiratory chain contains 3 multisubunit complexes succinate dehydrogenase (complex II, CII), ubiquinol-cytochrome c oxidoreductase (cytochrome b-c1 complex, complex III, CIII) and cytochrome c oxidase (complex IV, CIV), that cooperate to transfer electrons derived from NADH and succinate to molecular oxygen, creating an electrochemical gradient over the inner membrane that drives transmembrane transport and the ATP synthase. Cytochrome c oxidase is the component of the respiratory chain that catalyzes the reduction of oxygen to water. Electrons originating from reduced cytochrome c in the intermembrane space (IMS) are transferred via the dinuclear copper A center (CU(A)) of subunit 2 and heme A of subunit 1 to the active site in subunit 1, a binuclear center (BNC) formed by heme A3 and copper B (CU(B)). The BNC reduces molecular oxygen to 2 water molecules using 4 electrons from cytochrome c in the IMS and 4 protons from the mitochondrial matrix. The polypeptide is Cytochrome c oxidase subunit 2 (COII) (Rhipicephalus sanguineus (Brown dog tick)).